The following is an 83-amino-acid chain: Erabutoxin b (83 aa).

A signal peptide spans 1–21; sequence MKTLLLTLVVVTIVCLDLGYT. The loop I stretch occupies residues 24 to 38; sequence CFNHQSSQPQTTKTC. 4 disulfides stabilise this stretch: cysteine 24-cysteine 45, cysteine 38-cysteine 62, cysteine 64-cysteine 75, and cysteine 76-cysteine 81. Residues 39 to 44 are stretch between loop I and loop II; sequence SPGESS. The loop II stretch occupies residues 45–62; the sequence is CYHKQWSDFRGTIIERGC. The loop III stretch occupies residues 64–75; it reads CPTVKPGIKLSC.

Belongs to the three-finger toxin family. Short-chain subfamily. Type I alpha-neurotoxin sub-subfamily. As to expression, expressed by the venom gland.

The protein localises to the secreted. Binds with high affinity to muscular nicotinic acetylcholine receptors (nAChRs) (tested on Torpedo marmorata, Kd=0.07 nM), and with low affinity to neuronal alpha-7/CHRNA7 nAChRs (tested on chimeric alpha-7/CHRNA7, Kd=22 uM) and inhibit acetylcholine from binding to the receptor, thereby impairing neuromuscular transmission. Produces peripheral paralysis by blocking neuromuscular transmission at the postsynaptic site. This is Erabutoxin b from Laticauda semifasciata (Black-banded sea krait).